Consider the following 518-residue polypeptide: Bifunctional purine biosynthesis protein PurH (518 aa).

The MGS-like domain maps to 1–144 (MNRRAVLSVS…KNQERVSIVV (144 aa)).

It belongs to the PurH family.

It catalyses the reaction (6R)-10-formyltetrahydrofolate + 5-amino-1-(5-phospho-beta-D-ribosyl)imidazole-4-carboxamide = 5-formamido-1-(5-phospho-D-ribosyl)imidazole-4-carboxamide + (6S)-5,6,7,8-tetrahydrofolate. The enzyme catalyses IMP + H2O = 5-formamido-1-(5-phospho-D-ribosyl)imidazole-4-carboxamide. It participates in purine metabolism; IMP biosynthesis via de novo pathway; 5-formamido-1-(5-phospho-D-ribosyl)imidazole-4-carboxamide from 5-amino-1-(5-phospho-D-ribosyl)imidazole-4-carboxamide (10-formyl THF route): step 1/1. The protein operates within purine metabolism; IMP biosynthesis via de novo pathway; IMP from 5-formamido-1-(5-phospho-D-ribosyl)imidazole-4-carboxamide: step 1/1. In Desulfitobacterium hafniense (strain DSM 10664 / DCB-2), this protein is Bifunctional purine biosynthesis protein PurH.